Here is a 324-residue protein sequence, read N- to C-terminus: Lipoyl synthase (324 aa).

Cys-65, Cys-70, Cys-76, Cys-91, Cys-95, Cys-98, and Ser-302 together coordinate [4Fe-4S] cluster. A Radical SAM core domain is found at 77–291 (WEDREATFLI…AQYAEGLGFA (215 aa)).

Belongs to the radical SAM superfamily. Lipoyl synthase family. The cofactor is [4Fe-4S] cluster.

It is found in the cytoplasm. It catalyses the reaction [[Fe-S] cluster scaffold protein carrying a second [4Fe-4S](2+) cluster] + N(6)-octanoyl-L-lysyl-[protein] + 2 oxidized [2Fe-2S]-[ferredoxin] + 2 S-adenosyl-L-methionine + 4 H(+) = [[Fe-S] cluster scaffold protein] + N(6)-[(R)-dihydrolipoyl]-L-lysyl-[protein] + 4 Fe(3+) + 2 hydrogen sulfide + 2 5'-deoxyadenosine + 2 L-methionine + 2 reduced [2Fe-2S]-[ferredoxin]. It participates in protein modification; protein lipoylation via endogenous pathway; protein N(6)-(lipoyl)lysine from octanoyl-[acyl-carrier-protein]: step 2/2. Its function is as follows. Catalyzes the radical-mediated insertion of two sulfur atoms into the C-6 and C-8 positions of the octanoyl moiety bound to the lipoyl domains of lipoate-dependent enzymes, thereby converting the octanoylated domains into lipoylated derivatives. The sequence is that of Lipoyl synthase from Mycobacterium ulcerans (strain Agy99).